Consider the following 628-residue polypeptide: Glutamyl-tRNA(Gln) amidotransferase subunit E (628 aa).

It belongs to the GatB/GatE family. GatE subfamily. Heterodimer of GatD and GatE.

The catalysed reaction is L-glutamyl-tRNA(Gln) + L-glutamine + ATP + H2O = L-glutaminyl-tRNA(Gln) + L-glutamate + ADP + phosphate + H(+). Allows the formation of correctly charged Gln-tRNA(Gln) through the transamidation of misacylated Glu-tRNA(Gln) in organisms which lack glutaminyl-tRNA synthetase. The reaction takes place in the presence of glutamine and ATP through an activated gamma-phospho-Glu-tRNA(Gln). The GatDE system is specific for glutamate and does not act on aspartate. The protein is Glutamyl-tRNA(Gln) amidotransferase subunit E of Thermococcus gammatolerans (strain DSM 15229 / JCM 11827 / EJ3).